A 139-amino-acid polypeptide reads, in one-letter code: Large ribosomal subunit protein mL42 (139 aa).

The N-terminal 32 residues, 1–32 (MAVAAVKWVMSKRTILKHLFPVQNGALYCVCH), are a transit peptide targeting the mitochondrion.

The protein belongs to the mitochondrion-specific ribosomal protein mL42 family. In terms of assembly, component of the mitochondrial ribosome large subunit (39S) which comprises a 16S rRNA and about 50 distinct proteins. Component of the mitochondrial ribosome small subunit (28S) which comprises a 12S rRNA and about 30 distinct proteins.

The protein localises to the mitochondrion. The protein is Large ribosomal subunit protein mL42 (MRPL42) of Pongo abelii (Sumatran orangutan).